The chain runs to 70 residues: PPF2L antigen (70 aa).

The polypeptide is PPF2L antigen (Plasmodium falciparum (isolate Palo Alto / Uganda)).